Reading from the N-terminus, the 589-residue chain is Polypeptide N-acetylgalactosaminyltransferase 4 (589 aa).

Residues methionine 1–valine 11 are Cytoplasmic-facing. Residues glycine 12–threonine 31 traverse the membrane as a helical; Signal-anchor for type II membrane protein segment. At serine 32–glutamate 589 the chain is on the lumenal side. A disordered region spans residues serine 33–threonine 73. Disulfide bonds link cysteine 140–cysteine 369, cysteine 360–cysteine 438, cysteine 471–cysteine 488, cysteine 514–cysteine 531, and cysteine 553–cysteine 571. The catalytic subdomain A stretch occupies residues methionine 150–arginine 255. Residues aspartate 191 and arginine 216 each coordinate substrate. Aspartate 239 is a Mn(2+) binding site. Serine 240 serves as a coordination point for substrate. Histidine 241 provides a ligand contact to Mn(2+). Residues proline 315–arginine 377 form a catalytic subdomain B region. Tryptophan 346 lines the substrate pocket. Histidine 374 is a Mn(2+) binding site. 3 residues coordinate substrate: arginine 377, histidine 380, and tyrosine 382. Residues threonine 458 to glutamate 589 form the Ricin B-type lectin domain. Residue asparagine 523 is glycosylated (N-linked (GlcNAc...) asparagine).

This sequence belongs to the glycosyltransferase 2 family. GalNAc-T subfamily. Mn(2+) is required as a cofactor.

It localises to the golgi apparatus membrane. The catalysed reaction is L-seryl-[protein] + UDP-N-acetyl-alpha-D-galactosamine = a 3-O-[N-acetyl-alpha-D-galactosaminyl]-L-seryl-[protein] + UDP + H(+). The enzyme catalyses L-threonyl-[protein] + UDP-N-acetyl-alpha-D-galactosamine = a 3-O-[N-acetyl-alpha-D-galactosaminyl]-L-threonyl-[protein] + UDP + H(+). It functions in the pathway protein modification; protein glycosylation. Its function is as follows. Catalyzes the initial reaction in O-linked oligosaccharide biosynthesis, the transfer of an N-acetyl-D-galactosamine residue to a serine or threonine residue on the protein receptor. In Caenorhabditis elegans, this protein is Polypeptide N-acetylgalactosaminyltransferase 4 (gly-4).